We begin with the raw amino-acid sequence, 347 residues long: Tetraacyldisaccharide 4'-kinase (347 aa).

54–61 (TVGGAGKT) serves as a coordination point for ATP.

The protein belongs to the LpxK family.

It carries out the reaction a lipid A disaccharide + ATP = a lipid IVA + ADP + H(+). Its pathway is glycolipid biosynthesis; lipid IV(A) biosynthesis; lipid IV(A) from (3R)-3-hydroxytetradecanoyl-[acyl-carrier-protein] and UDP-N-acetyl-alpha-D-glucosamine: step 6/6. In terms of biological role, transfers the gamma-phosphate of ATP to the 4'-position of a tetraacyldisaccharide 1-phosphate intermediate (termed DS-1-P) to form tetraacyldisaccharide 1,4'-bis-phosphate (lipid IVA). This is Tetraacyldisaccharide 4'-kinase from Rhizobium etli (strain CIAT 652).